The primary structure comprises 2400 residues: Retinitis pigmentosa 1-like 1 protein (2400 aa).

Doublecortin domains are found at residues 34–118 (KKIT…GPGR) and 152–231 (RRIL…PAMK). 6 disordered regions span residues 104–152 (CSDK…KTPR), 230–310 (MKNA…DDMK), 444–1064 (GRER…DREA), 1188–1251 (AMTE…GDLE), 1275–1501 (EAER…GAAE), and 1697–2400 (RGEH…DLDF). A compositionally biased stretch (polar residues) spans 242-251 (SGLTSRNKNG). Residues 277–287 (RPGPSNPPVGP) show a composition bias toward pro residues. Polar residues predominate over residues 450–460 (QDSASPASSTG). Low complexity-rich tracts occupy residues 530 to 543 (GASSDSSASTGSHE) and 573 to 584 (DPASPALSLSSL). The segment covering 591–601 (AETQGQGTEQA) has biased composition (polar residues). Composition is skewed to low complexity over residues 625-637 (SSTPSTCTSSQQG) and 645-654 (ASAMSSPSSP). Residues 661 to 670 (PRGHPRHSHY) show a composition bias toward basic residues. Composition is skewed to polar residues over residues 711–740 (TRTQASGNLRPPSSGSLPSQDLLGTSSATV) and 825–835 (CCSQPGTQPAQ). Composition is skewed to low complexity over residues 864-880 (QRRSSSCGSTGSSHQST), 903-921 (PNSGASRRSSASQGAGSRG), and 941-953 (SGVSPSSLPRSSP). Polar residues-rich tracts occupy residues 1223–1238 (LVTQGTELPLKTSNQR) and 1285–1299 (ASSNLEQLAENTVQE). The 1-1; approximate repeat unit spans residues 1292 to 1307 (LAENTVQEEVQLEETK). The tract at residues 1292-1342 (LAENTVQEEVQLEETKEGTEGEGLQEEAVQLEETKTEEGLQEEGVQLEETK) is 3 X 16 AA approximate tandem repeats of T-E-E-G-L-Q-E-E-G-V-Q-L-E-E-T-K. The stretch at 1310–1326 (TEGEGLQEEAVQLEETK) is one 1-2; approximate repeat. A 1-3 repeat occupies 1327–1342 (TEEGLQEEGVQLEETK). Over residues 1346–1363 (GEGQQEEEAQLEEIEETG) the composition is skewed to acidic residues. Positions 1434–1445 (RASASAEPCPAE) are enriched in low complexity. Composition is skewed to polar residues over residues 1460 to 1472 (TDPSASERQSGSQ) and 1489 to 1501 (EHTQAQPTQGAAE). Positions 1726–1736 (AEGGLGPGLSQ) are enriched in gly residues. Basic and acidic residues-rich tracts occupy residues 1752 to 1762 (LNRDKDPKLGE) and 1769 to 1778 (AQEREGKTHN). 3 tandem repeats follow at residues 1836 to 1851 (EAPEAEGEAQPESEGV), 1852 to 1867 (EAPEAEGDAQEAEGEA), and 1875 to 1890 (EAPEAEGEAQPESEDV). 2 stretches are compositionally biased toward acidic residues: residues 1836-1909 (EAPE…AEAP) and 1920-1948 (ESVEALETEGEDEPESEGAEAQEAEEAAQ). Residues 1836-2244 (EAPEAEGEAQ…GEAQPESEGE (409 aa)) form a 25 X 16 AA approximate tandem repeats of [ED]-[AT]-[PQ]-[ED]-[AVT]-E-[GKE]-[ED]-[AMT]-Q-[EPK]-[EAT]-[TSELP]-[EG]-[EGSQDI]-[AVIE] region. One copy of the 2-4; approximate repeat lies at 1891 to 1906 (ETPEAEWEVQPESEGA). A 2-5 repeat occupies 1907 to 1921 (EAPEAEKEAQPETES). A 2-6; approximate repeat occupies 1923 to 1938 (EALETEGEDEPESEGA). Residues 1934-2017 (ESEGAEAQEA…EMQEAEEEAQ (84 aa)) adopt a coiled-coil conformation. The 2-7 repeat unit spans residues 1939–1954 (EAQEAEEAAQEAEGQT). Residues 1949 to 1958 (EAEGQTQPES) are compositionally biased toward low complexity. The stretch at 1955–1970 (QPESEVIESQEAEEEA) is one 2-8; approximate repeat. Acidic residues-rich tracts occupy residues 1959-2022 (EVIE…ESDG), 2048-2075 (AQPESDGVEAPEAEEEAQEAEGEVQEAE), 2083-2108 (EDVDAQEAEGEAQPESEGVEAPEAEG), and 2117-2245 (EAPE…EGET). Residues 1971–1984 (QPESEDVEALEVEV) form a 2-9; approximate repeat. Repeat copies occupy residues 1985–2000 (ETQEAEGEAQPESEDV) and 2001–2016 (EAPEAEGEMQEAEEEA). Residues 2017 to 2031 (QPESDGVEAQPKSEG) form a 2-12; approximate repeat. A 2-13d repeat occupies 2033–2048 (EAQEVEGETQKTEGDA). Positions 2054-2081 (GVEAPEAEEEAQEAEGEVQEAEGEAHPE) form a coiled coil. The stretch at 2056–2071 (EAPEAEEEAQEAEGEV) is one 2-14 repeat. A 2-15; approximate repeat occupies 2072–2085 (QEAEGEAHPESEDV). 10 consecutive repeat copies span residues 2086–2101 (DAQEAEGEAQPESEGV), 2102–2116 (EAPEAEGEAQKAEGI), 2117–2132 (EAPETEGEAQPESEGI), 2133–2148 (EAPEAEGEAQPESEGV), 2149–2164 (EAQDAEGEAQPESEGI), 2165–2180 (EAQEAEEEAQPELEGV), 2181–2196 (EAPEAEGEAQPESEGI), 2197–2212 (EAPEAEGEAQPELEGV), 2213–2228 (EAPEAEEEAQPEPEGV), and 2229–2244 (ETPEAEGEAQPESEGE). Over residues 2292–2308 (PGSQTGPSSSRASSWGN) the composition is skewed to polar residues. Residues 2312 to 2327 (KDSENDHVLGDTRSPD) are compositionally biased toward basic and acidic residues.

In terms of assembly, interacts with RP1; has a synergistic effect with RP1 in photoreceptor differentiation. In terms of tissue distribution, retinal-specific; expressed in photoreceptor.

It is found in the cytoplasm. The protein localises to the cytoskeleton. Its subcellular location is the cilium axoneme. The protein resides in the cell projection. It localises to the cilium. It is found in the photoreceptor outer segment. Functionally, required for the differentiation of photoreceptor cells. Plays a role in the organization of outer segment of rod and cone photoreceptors. The sequence is that of Retinitis pigmentosa 1-like 1 protein (RP1L1) from Homo sapiens (Human).